We begin with the raw amino-acid sequence, 141 residues long: Nucleoside diphosphate kinase (141 aa).

ATP is bound by residues lysine 11, phenylalanine 59, arginine 87, threonine 93, arginine 104, and asparagine 114. The active-site Pros-phosphohistidine intermediate is histidine 117.

This sequence belongs to the NDK family. Homotetramer. It depends on Mg(2+) as a cofactor.

Its subcellular location is the cytoplasm. The enzyme catalyses a 2'-deoxyribonucleoside 5'-diphosphate + ATP = a 2'-deoxyribonucleoside 5'-triphosphate + ADP. The catalysed reaction is a ribonucleoside 5'-diphosphate + ATP = a ribonucleoside 5'-triphosphate + ADP. In terms of biological role, major role in the synthesis of nucleoside triphosphates other than ATP. The ATP gamma phosphate is transferred to the NDP beta phosphate via a ping-pong mechanism, using a phosphorylated active-site intermediate. The sequence is that of Nucleoside diphosphate kinase from Laribacter hongkongensis (strain HLHK9).